A 235-amino-acid chain; its full sequence is Lipoprotein signal peptidase (235 aa).

The segment at 1–23 (MTDETSGPAEPVTDAPGDAESPA) is disordered. Helical transmembrane passes span 31-51 (LLLT…VLAV), 84-104 (GYTW…IWMG), and 108-128 (VSPW…GNLV). Active-site residues include aspartate 144 and aspartate 158. The helical transmembrane segment at 156 to 176 (VADPSVVGGAILLVALSLFGF) threads the bilayer. Positions 185-235 (RPGEDAEPSAGASDSTPEAPAADGPDKPAGPVGPEDAAEESKTVGHQAEPS) are disordered. A compositionally biased stretch (low complexity) spans 201-218 (PEAPAADGPDKPAGPVGP).

Belongs to the peptidase A8 family.

The protein resides in the cell membrane. The catalysed reaction is Release of signal peptides from bacterial membrane prolipoproteins. Hydrolyzes -Xaa-Yaa-Zaa-|-(S,diacylglyceryl)Cys-, in which Xaa is hydrophobic (preferably Leu), and Yaa (Ala or Ser) and Zaa (Gly or Ala) have small, neutral side chains.. The protein operates within protein modification; lipoprotein biosynthesis (signal peptide cleavage). Functionally, this protein specifically catalyzes the removal of signal peptides from prolipoproteins. The protein is Lipoprotein signal peptidase of Mycolicibacterium smegmatis (strain ATCC 700084 / mc(2)155) (Mycobacterium smegmatis).